Reading from the N-terminus, the 965-residue chain is Phosphatidylethanolamine N-methyltransferase (965 aa).

The disordered stretch occupies residues 1–55; it reads MSSSAADPFAARLNSDVRQRHPTASATSKNVEGTSQQKQQQQQQQSEANAAASRV. Residues 1–91 are Lumenal-facing; that stretch reads MSSSAADPFA…DPREPKNLSD (91 aa). Over residues 22 to 35 the composition is skewed to polar residues; sequence PTASATSKNVEGTS. The segment covering 36-45 has biased composition (low complexity); sequence QQKQQQQQQQ. A helical membrane pass occupies residues 92–112; sequence VAVLAIIALHFLAAYYLPWGV. The Cytoplasmic segment spans residues 113-115; sequence KRP. The helical transmembrane segment at 116 to 136 threads the bilayer; the sequence is LFAAIFMFWRLAYNVGIGYLL. At 137-201 the chain is on the lumenal side; it reads TIQSKYKLLV…EYNTWLTFRR (65 aa). A helical membrane pass occupies residues 202 to 222; that stretch reads VVDLILMCDFISYCLFAIVCA. The Cytoplasmic portion of the chain corresponds to 223 to 229; the sequence is HKPDGEG. The helical transmembrane segment at 230-250 threads the bilayer; that stretch reads LFMCFARWAAGITLVGFNLWV. Residues 251 to 279 are Lumenal-facing; sequence KLDAHRVVKDYAWYWGDFFYLIEQELTFD. Residues 280 to 300 form a helical membrane-spanning segment; sequence GVFELAPHPMYSIGYAGYYGI. The Cytoplasmic segment spans residues 301 to 306; sequence SMMAAS. The chain crosses the membrane as a helical span at residues 307-327; it reads YDVLFISIIAHAAQFAFLVIV. At 328–389 the chain is on the lumenal side; the sequence is ENPHIEKTYN…IGLKNLDFFR (62 aa). A helical transmembrane segment spans residues 390 to 410; sequence ITDVAIVLLCAYLAVVTMVTP. The Cytoplasmic portion of the chain corresponds to 411–417; that stretch reads NTRFYQA. The chain crosses the membrane as a helical span at residues 418 to 438; it reads LFVLHALAWRLWYSAGLGVIL. The Lumenal segment spans residues 439–467; it reads TMQSEEKMFTRHFLKYGESVGEAWRQWKG. The helical transmembrane segment at 468-488 threads the bilayer; it reads IYHLSNCLCHASFIAASYKMY. The Cytoplasmic segment spans residues 489 to 496; it reads EFPADWTY. The chain crosses the membrane as a helical span at residues 497-517; sequence GWALLKHVVGLSLIALQVWTA. Over 518 to 573 the chain is Lumenal; it reads TSIYESLGEFGWFYGDFFFDSKRQLTYTSIYRFLNNPERVFGTAGLWGAALITWSR. A helical membrane pass occupies residues 574–594; it reads AIFLMALAGHFLTLAFLAYVE. The Cytoplasmic segment spans residues 595–965; the sequence is KPHMQKVYGR…TTPVDSKFSE (371 aa).

Belongs to the class VI-like SAM-binding methyltransferase superfamily. CHO2 family.

It is found in the endoplasmic reticulum membrane. The enzyme catalyses a 1,2-diacyl-sn-glycero-3-phosphoethanolamine + S-adenosyl-L-methionine = a 1,2-diacyl-sn-glycero-3-phospho-N-methylethanolamine + S-adenosyl-L-homocysteine + H(+). It participates in phospholipid metabolism; phosphatidylcholine biosynthesis. Catalyzes the first step of the methylation pathway of phosphatidylcholine biosynthesis, the SAM-dependent methylation of phosphatidylethanolamine (PE) to phosphatidylmonomethylethanolamine (PMME). The chain is Phosphatidylethanolamine N-methyltransferase from Neurospora crassa (strain ATCC 24698 / 74-OR23-1A / CBS 708.71 / DSM 1257 / FGSC 987).